The sequence spans 437 residues: UDP-N-acetylmuramate--L-alanine ligase (437 aa).

114–120 (GTHGKTS) contributes to the ATP binding site.

Belongs to the MurCDEF family.

Its subcellular location is the cytoplasm. The catalysed reaction is UDP-N-acetyl-alpha-D-muramate + L-alanine + ATP = UDP-N-acetyl-alpha-D-muramoyl-L-alanine + ADP + phosphate + H(+). Its pathway is cell wall biogenesis; peptidoglycan biosynthesis. Its function is as follows. Cell wall formation. The chain is UDP-N-acetylmuramate--L-alanine ligase from Lactobacillus helveticus (strain DPC 4571).